The primary structure comprises 570 residues: Sulfite reductase [NADPH] hemoprotein beta-component (570 aa).

[4Fe-4S] cluster contacts are provided by Cys-434, Cys-440, Cys-479, and Cys-483. Siroheme is bound at residue Cys-483.

Belongs to the nitrite and sulfite reductase 4Fe-4S domain family. Alpha(8)-beta(8). The alpha component is a flavoprotein, the beta component is a hemoprotein. Siroheme is required as a cofactor. Requires [4Fe-4S] cluster as cofactor.

The catalysed reaction is hydrogen sulfide + 3 NADP(+) + 3 H2O = sulfite + 3 NADPH + 4 H(+). It functions in the pathway sulfur metabolism; hydrogen sulfide biosynthesis; hydrogen sulfide from sulfite (NADPH route): step 1/1. Component of the sulfite reductase complex that catalyzes the 6-electron reduction of sulfite to sulfide. This is one of several activities required for the biosynthesis of L-cysteine from sulfate. In Salmonella dublin (strain CT_02021853), this protein is Sulfite reductase [NADPH] hemoprotein beta-component.